Consider the following 265-residue polypeptide: Vegetative storage protein 2 (265 aa).

Residues 1-18 (MKILSLSLLLLLAATVSA) form the signal peptide. Residues N110, N188, and N210 are each glycosylated (N-linked (GlcNAc...) asparagine).

This sequence belongs to the APS1/VSP family. As to expression, highly expressed in flowers, but also found in leaves, vegetative shoots, petioles, peduncles, and receptacles of floral organs.

May function as somatic storage protein during early seedling development. The chain is Vegetative storage protein 2 (VSP2) from Arabidopsis thaliana (Mouse-ear cress).